The primary structure comprises 175 residues: Protein FMP23, mitochondrial (175 aa).

The transit peptide at 1–38 (MLINHLSKIRTVRHFSNIKPVLSKEVSRRVIVAPASHF) directs the protein to the mitochondrion.

It is found in the mitochondrion. May be involved in mitochondrial iron or copper homeostatis. The sequence is that of Protein FMP23, mitochondrial (FMP23) from Saccharomyces cerevisiae (strain ATCC 204508 / S288c) (Baker's yeast).